The chain runs to 812 residues: Endogenous retrovirus group K member 18 Pol protein (812 aa).

The 189-residue stretch at 57-245 (LEKGHIEPSF…TPFHYLGMQI (189 aa)) folds into the Reverse transcriptase domain. The short motif at 161 to 164 (LPQG) is the LPQG element. The short motif at 195 to 198 (YFDD) is the YXDD element. One can recognise an RNase H type-1 domain in the interval 460-590 (LENALTVFTD…ADLLVSSAFI (131 aa)). D469, E497, D517, and D582 together coordinate Mg(2+). Residues 587–628 (SAFIKAQELHALTHVNAAGLKNKFDVTWKQAKDIVQHCTQCQ) form an Integrase-type zinc finger. Residues H596, H600, C624, and C627 each contribute to the Zn(2+) site. The Integrase catalytic domain occupies 637 to 803 (AGVNPEVCVL…TSAEHLTGKK (167 aa)).

Belongs to the beta type-B retroviral polymerase family. HERV class-II K(HML-2) pol subfamily.

The catalysed reaction is DNA(n) + a 2'-deoxyribonucleoside 5'-triphosphate = DNA(n+1) + diphosphate. It carries out the reaction Endonucleolytic cleavage to 5'-phosphomonoester.. Functionally, early post-infection, the reverse transcriptase converts the viral RNA genome into double-stranded viral DNA. The RNase H domain of the reverse transcriptase performs two functions. It degrades the RNA template and specifically removes the RNA primer from the RNA/DNA hybrid. Following nuclear import, the integrase catalyzes the insertion of the linear, double-stranded viral DNA into the host cell chromosome. Endogenous Pol proteins may have kept, lost or modified their original function during evolution. This Homo sapiens (Human) protein is Endogenous retrovirus group K member 18 Pol protein (ERVK-18).